The following is a 115-amino-acid chain: Ribonuclease P protein component (115 aa).

It belongs to the RnpA family. As to quaternary structure, consists of a catalytic RNA component (M1 or rnpB) and a protein subunit.

The enzyme catalyses Endonucleolytic cleavage of RNA, removing 5'-extranucleotides from tRNA precursor.. Functionally, RNaseP catalyzes the removal of the 5'-leader sequence from pre-tRNA to produce the mature 5'-terminus. It can also cleave other RNA substrates such as 4.5S RNA. The protein component plays an auxiliary but essential role in vivo by binding to the 5'-leader sequence and broadening the substrate specificity of the ribozyme. The protein is Ribonuclease P protein component of Bacillus cereus (strain 03BB102).